A 183-amino-acid polypeptide reads, in one-letter code: Proton-transporting V-type ATPase complex assembly regulator TMEM9 (183 aa).

A signal peptide spans 1 to 20 (MKLLSLVAVVGCLLVPPAEA). N-linked (GlcNAc...) asparagine glycosylation is found at Asn21, Asn38, and Asn47. At 21 to 89 (NKSSEDIRCK…YEERSTTTIK (69 aa)) the chain is on the extracellular side. The helical transmembrane segment at 90 to 110 (VIIVIYLSVVGALLLYMAFLM) threads the bilayer. At 111-183 (LVDPLIRKPD…TVFDRHKMLS (73 aa)) the chain is on the cytoplasmic side. 2 positions are modified to phosphoserine: Ser137 and Ser144.

It belongs to the TMEM9 family. In terms of assembly, interacts with the v-ATPase accessory protein ATP6AP2 and with the v-ATPase complex subunit ATP6V0D1; these interactions lead to the assembly of the v-ATPase complex. N-glycosylated. In terms of tissue distribution, highly expressed in adrenal gland, thyroid gland, testis, ovary and prostate. Moderate expression in trachea, spinal cord, stomach, colon, small intestine and spleen. Low expression in bone marrow, lymph node, thymus and peripheral blood lymphocytes. Expression is detected in hematopoietic cell lines including those of myeloid, erythroid, B- and T-cell origin.

Its subcellular location is the lysosome membrane. It is found in the late endosome membrane. The protein localises to the endosome. It localises to the multivesicular body membrane. Transmembrane protein that binds to and facilitates the assembly of lysosomal proton-transporting V-type ATPase (v-ATPase), resulting in enhanced lysosomal acidification and trafficking. By bringing the v-ATPase accessory protein ATP6AP2 and the v-ATPase subunit ATP6V0D1 together, allows v-ATPase complex formation and activation. TMEM9-controlled vesicular acidification induces hyperactivation of Wnt/beta-catenin signaling, involved in development, tissue homeostasis and tissue regeneration, through lysosomal degradation of adenomatous polyposis coli/APC. In the liver, involved in hepatic regeneration. In Homo sapiens (Human), this protein is Proton-transporting V-type ATPase complex assembly regulator TMEM9.